Reading from the N-terminus, the 95-residue chain is Cobalt transport protein CbiN (95 aa).

Transmembrane regions (helical) follow at residues I7–G27 and L67–Y87.

It belongs to the CbiN family. As to quaternary structure, forms an energy-coupling factor (ECF) transporter complex composed of an ATP-binding protein (A component, CbiO), a transmembrane protein (T component, CbiQ) and 2 possible substrate-capture proteins (S components, CbiM and CbiN) of unknown stoichimetry.

The protein localises to the cell membrane. It participates in cofactor biosynthesis; adenosylcobalamin biosynthesis. In terms of biological role, part of the energy-coupling factor (ECF) transporter complex CbiMNOQ involved in cobalt import. This is Cobalt transport protein CbiN from Methanothermobacter marburgensis (strain ATCC BAA-927 / DSM 2133 / JCM 14651 / NBRC 100331 / OCM 82 / Marburg) (Methanobacterium thermoautotrophicum).